We begin with the raw amino-acid sequence, 1108 residues long: DNA-directed RNA polymerase subunit beta (1108 aa).

The protein belongs to the RNA polymerase beta chain family. In terms of assembly, in plastids the minimal PEP RNA polymerase catalytic core is composed of four subunits: alpha, beta, beta', and beta''. When a (nuclear-encoded) sigma factor is associated with the core the holoenzyme is formed, which can initiate transcription.

The protein localises to the plastid. It localises to the chloroplast. The enzyme catalyses RNA(n) + a ribonucleoside 5'-triphosphate = RNA(n+1) + diphosphate. In terms of biological role, DNA-dependent RNA polymerase catalyzes the transcription of DNA into RNA using the four ribonucleoside triphosphates as substrates. The protein is DNA-directed RNA polymerase subunit beta of Gnetum parvifolium (Small-leaved jointfir).